We begin with the raw amino-acid sequence, 332 residues long: DGAT1/2-independent enzyme synthesizing storage lipids (332 aa).

At 1-10 (MIGSNESSTE) the chain is on the lumenal side. Residue Asn5 is glycosylated (N-linked (GlcNAc...) asparagine). A helical transmembrane segment spans residues 11 to 31 (GPIPTSYLSFLAYLLGEWTGV). At 32–45 (EHTEDYLSYGAYLS) the chain is on the cytoplasmic side. A helical transmembrane segment spans residues 46 to 66 (WVLFPLAIVFILPVAIFFFCF). Topologically, residues 67–332 (NTSLLLLHIY…ERFQTRQKED (266 aa)) are lumenal. The active site involves His132. The N-linked (GlcNAc...) asparagine glycan is linked to Asn289.

It belongs to the diacylglycerol acyltransferase family. Highly divergent.

It localises to the endoplasmic reticulum membrane. It catalyses the reaction a 1,2-diacylglycerol + a 1,2-diacyl-sn-glycero-3-phosphocholine = a triacylglycerol + a 1-acyl-sn-glycero-3-phosphocholine. It carries out the reaction a 1-O-alkyl-2-acyl-sn-glycero-3-phosphocholine + a 1,2-diacylglycerol = a 1-O-alkyl-sn-glycero-3-phosphocholine + a triacylglycerol. The catalysed reaction is a 2-acylglycerol + an acyl-CoA = a 1,2-diacylglycerol + CoA. The enzyme catalyses an acyl-CoA + a 1,2-diacyl-sn-glycerol = a triacyl-sn-glycerol + CoA. It catalyses the reaction 2-(9Z-octadecenoyl)-glycerol + (9Z)-octadecenoyl-CoA = 1,2-di-(9Z-octadecenoyl)-glycerol + CoA. It carries out the reaction 1,2-di-(9Z-octadecenoyl)-sn-glycerol + (9Z)-octadecenoyl-CoA = 1,2,3-tri-(9Z-octadecenoyl)-glycerol + CoA. In terms of biological role, catalytic subunit of the alternative triglyceride biosynthesis pathway, which mediates formation of triacylglycerol from diacylglycerol and membrane phospholipids. Synthesizes triacylglycerol at the expense of membrane phospholipids, such as phosphatidylcholine (PC) and its ether-linked form (ePC), thereby altering the composition of membranes. The alternative triglyceride biosynthesis pathway is probably required to provide the energy required for rapid growth when fuel sources are limiting. It maintains mitochondrial function during periods of extracellular lipid starvation. Can also use acyl-CoA as donor: acts as a acyl-CoA:monoacylglycerol acyltransferase (MGAT), but also shows acyl-CoA:diacylglycerol acyltransferase (DGAT) activity. The chain is DGAT1/2-independent enzyme synthesizing storage lipids (TMEM68) from Gallus gallus (Chicken).